We begin with the raw amino-acid sequence, 443 residues long: MRLTRKRLCSFLIALYCLFSLYAAYHVFFGRRRQAPAGSPRGLRKGAAPARERRGREQSTLESEEWNPWEGDEKNEQQHRFKTSLQILDKSTKGKTDLSVQIWGKAAIGLYLWEHIFEGLLDPSDVTAQWREGKSIVGRTQYSFITGPAVIPGYFSVDVNNVVLILNGREKAKIFYATQWLLYAQNLVQIQKLQHLAVVLLGNEHCDNEWINPFLKRNGGFVELLFIIYDSPWINDVDVFQWPLGVATYRNFPVVEASWSMLHDERPYLCNFLGTIYENSSRQALMNILKKDGNDKLCWVSAREHWQPQETNESLKNYQDALLQSDLTLCPVGVNTECYRIYEACSYGSIPVVEDVMTAGNCGNTSVHHGAPLQLLKSMGAPFIFIKNWKELPAVLEKEKTIILQEKIERRKMLLQWYQHFKTELKMKFTNILESSFLMNNKS.

The Cytoplasmic segment spans residues 1-9; sequence MRLTRKRLC. A helical; Signal-anchor for type II membrane protein transmembrane segment spans residues 10–30; that stretch reads SFLIALYCLFSLYAAYHVFFG. Over 31 to 443 the chain is Extracellular; the sequence is RRRQAPAGSP…ESSFLMNNKS (413 aa). Residues 35-76 form a disordered region; that stretch reads APAGSPRGLRKGAAPARERRGREQSTLESEEWNPWEGDEKNE. Residues 50 to 59 show a composition bias toward basic and acidic residues; that stretch reads ARERRGREQS.

The protein belongs to the RXYLT1 family. In terms of assembly, forms a complex composed of FKTN/fukutin, FKRP and RXYLT1/TMEM5.

Its subcellular location is the golgi apparatus membrane. It catalyses the reaction 3-O-[Rib-ol-P-Rib-ol-P-3-beta-D-GalNAc-(1-&gt;3)-beta-D-GlcNAc-(1-&gt;4)-(O-6-P-alpha-D-Man)]-Thr-[protein] + UDP-alpha-D-xylose = 3-O-[beta-D-Xyl-(1-&gt;4)-Rib-ol-P-Rib-ol-P-3-beta-D-GalNAc-(1-&gt;3)-beta-D-GlcNAc-(1-&gt;4)-(O-6-P-alpha-D-Man)]-Thr-[protein] + UDP + H(+). The protein operates within protein modification; protein glycosylation. Functionally, acts as a UDP-D-xylose:ribitol-5-phosphate beta1,4-xylosyltransferase, which catalyzes the transfer of UDP-D-xylose to ribitol 5-phosphate (Rbo5P) to form the Xylbeta1-4Rbo5P linkage on O-mannosyl glycan. Participates in the biosynthesis of the phosphorylated O-mannosyl trisaccharide (N-acetylgalactosamine-beta-3-N-acetylglucosamine-beta-4-(phosphate-6-)mannose), a carbohydrate structure present in alpha-dystroglycan (DAG1), which is required for binding laminin G-like domain-containing extracellular proteins with high affinity. This chain is Ribitol-5-phosphate xylosyltransferase 1, found in Homo sapiens (Human).